The sequence spans 253 residues: MVLIRVLANLLILQLSYAQKSSELVIGGDECNINEHRFLAIVHTDISLCTGTLINQEWVLTAAHCDRGDILVLLGVHRLKDVQTRVAKEKFICPNRKKDNEKDKDIMLIRLDSPVNNSTHIAPLSLPSNPPSVGSVCRIMGWGAITSPNVTFPGVPHCADINIFDYEVCRAAKPELPATSRTLCAGILEGGKGSCDGDSGGPLICNGEIQGIVSWGGDICAQPREPGHYTKVFDYTDWIQSIIAGNTDVTCPP.

The signal sequence occupies residues 1-18; the sequence is MVLIRVLANLLILQLSYA. A propeptide spanning residues 19-24 is cleaved from the precursor; sequence QKSSEL. The Peptidase S1 domain maps to 25-244; sequence VIGGDECNIN…YTDWIQSIIA (220 aa). 6 disulfides stabilise this stretch: Cys-31–Cys-158, Cys-49–Cys-65, Cys-93–Cys-251, Cys-137–Cys-205, Cys-169–Cys-184, and Cys-195–Cys-220. Residues His-64 and Asp-105 each act as charge relay system in the active site. N-linked (GlcNAc...) asparagine glycans are attached at residues Asn-116, Asn-117, and Asn-149. Ser-199 acts as the Charge relay system in catalysis.

The protein belongs to the peptidase S1 family. Snake venom subfamily. In terms of assembly, monomer. In terms of tissue distribution, expressed by the venom gland.

The protein resides in the secreted. In terms of biological role, snake venom serine protease that may act in the hemostasis system of the prey. In Crotalus adamanteus (Eastern diamondback rattlesnake), this protein is Snake venom serine proteinase 14.